The chain runs to 429 residues: Glucose-1-phosphate adenylyltransferase (429 aa).

Residues glycine 162, 177 to 178 (EK), and serine 209 contribute to the alpha-D-glucose 1-phosphate site.

Belongs to the bacterial/plant glucose-1-phosphate adenylyltransferase family. As to quaternary structure, homotetramer.

It catalyses the reaction alpha-D-glucose 1-phosphate + ATP + H(+) = ADP-alpha-D-glucose + diphosphate. Its pathway is glycan biosynthesis; glycogen biosynthesis. In terms of biological role, involved in the biosynthesis of ADP-glucose, a building block required for the elongation reactions to produce glycogen. Catalyzes the reaction between ATP and alpha-D-glucose 1-phosphate (G1P) to produce pyrophosphate and ADP-Glc. The sequence is that of Glucose-1-phosphate adenylyltransferase from Nostoc punctiforme (strain ATCC 29133 / PCC 73102).